Reading from the N-terminus, the 224-residue chain is UPF0173 metal-dependent hydrolase Memar_1421 (224 aa).

The protein belongs to the UPF0173 family.

The sequence is that of UPF0173 metal-dependent hydrolase Memar_1421 from Methanoculleus marisnigri (strain ATCC 35101 / DSM 1498 / JR1).